The primary structure comprises 116 residues: MYEQAIVIRNDLKMGKGKMAAQACHASLQAFLHAQKISSSAVSGWMNEGQKKVVLKVNSEKELLEIFKNVNIEGLPCSLIRDAGRTQIEPGSLTAVGIGPEKEEKISKVTKDLKLL.

Belongs to the PTH2 family.

It localises to the cytoplasm. The enzyme catalyses an N-acyl-L-alpha-aminoacyl-tRNA + H2O = an N-acyl-L-amino acid + a tRNA + H(+). In terms of biological role, the natural substrate for this enzyme may be peptidyl-tRNAs which drop off the ribosome during protein synthesis. The chain is Peptidyl-tRNA hydrolase from Methanococcus maripaludis (strain C6 / ATCC BAA-1332).